The following is a 466-amino-acid chain: Phosphomethylpyrimidine synthase (466 aa).

Residues Asn80, Met109, Tyr139, His175, 195-197 (SRG), 236-239 (DSLR), and Glu275 each bind substrate. His279 provides a ligand contact to Zn(2+). Tyr302 lines the substrate pocket. His343 is a binding site for Zn(2+). [4Fe-4S] cluster-binding residues include Cys423, Cys426, and Cys431.

This sequence belongs to the ThiC family. It depends on [4Fe-4S] cluster as a cofactor.

The catalysed reaction is 5-amino-1-(5-phospho-beta-D-ribosyl)imidazole + S-adenosyl-L-methionine = 4-amino-2-methyl-5-(phosphooxymethyl)pyrimidine + CO + 5'-deoxyadenosine + formate + L-methionine + 3 H(+). It functions in the pathway cofactor biosynthesis; thiamine diphosphate biosynthesis. Functionally, catalyzes the synthesis of the hydroxymethylpyrimidine phosphate (HMP-P) moiety of thiamine from aminoimidazole ribotide (AIR) in a radical S-adenosyl-L-methionine (SAM)-dependent reaction. The protein is Phosphomethylpyrimidine synthase of Synechococcus sp. (strain RCC307).